Here is a 679-residue protein sequence, read N- to C-terminus: Glycine--tRNA ligase beta subunit (679 aa).

It belongs to the class-II aminoacyl-tRNA synthetase family. Tetramer of two alpha and two beta subunits.

Its subcellular location is the cytoplasm. It carries out the reaction tRNA(Gly) + glycine + ATP = glycyl-tRNA(Gly) + AMP + diphosphate. This Streptococcus pyogenes serotype M1 protein is Glycine--tRNA ligase beta subunit.